We begin with the raw amino-acid sequence, 334 residues long: Large ribosomal subunit protein uL3 (334 aa).

Over residues 1–10 (MGMKKNRPRR) the composition is skewed to basic residues. Residues 1 to 21 (MGMKKNRPRRGSLAFSPRKRA) are disordered.

The protein belongs to the universal ribosomal protein uL3 family. In terms of assembly, part of the 50S ribosomal subunit. Forms a cluster with proteins L14 and L24e.

Its function is as follows. One of the primary rRNA binding proteins, it binds directly near the 3'-end of the 23S rRNA, where it nucleates assembly of the 50S subunit. In Methanococcus maripaludis (strain C5 / ATCC BAA-1333), this protein is Large ribosomal subunit protein uL3.